The following is an 856-amino-acid chain: Structure-specific endonuclease subunit SLX4 (856 aa).

Over residues 1–19 (MDNAAIASQSNTPPSNGRS) the composition is skewed to polar residues. Disordered regions lie at residues 1 to 24 (MDNAAIASQSNTPPSNGRSSARFV), 38 to 65 (VIEPSSPFSPPSPSTLLTSLSKSPSHKI), 88 to 121 (VDSPKRQDKSITGSKAKPASTMRHGQRTASHKMA), 139 to 202 (KTRK…DNEL), 296 to 326 (GIQTPTESRPATNDSQSISSKQQRVKVKKPQ), 362 to 392 (KKMGVTKRTSGTERANAARGKSDTLKNGNGP), 621 to 640 (SKSSKLEPKPNQRNHKSQGD), 668 to 689 (RLAKTSVKSQEPKSFSLSNEGP), and 715 to 742 (DSVGEALPLSPSHSSNGNGTLHHPQDCD). The span at 51–60 (STLLTSLSKS) shows a compositional bias: low complexity. Residues 139 to 152 (KTRKKKAATAKRTR) show a composition bias toward basic residues. The span at 296-309 (GIQTPTESRPATND) shows a compositional bias: polar residues. Polar residues predominate over residues 673 to 686 (SVKSQEPKSFSLSN).

The protein belongs to the SLX4 family. Forms a heterodimer with SLX1. Phosphorylated in response to DNA damage.

It is found in the nucleus. Its function is as follows. Regulatory subunit of the SLX1-SLX4 structure-specific endonuclease that resolves DNA secondary structures generated during DNA repair and recombination. Has endonuclease activity towards branched DNA substrates, introducing single-strand cuts in duplex DNA close to junctions with ss-DNA. This is Structure-specific endonuclease subunit SLX4 from Blastomyces gilchristii (strain SLH14081) (Blastomyces dermatitidis).